Reading from the N-terminus, the 288-residue chain is Cyclin-dependent kinase 2 homolog (288 aa).

One can recognise a Protein kinase domain in the interval 4 to 284 (YHGLEKIGEG…AKQAIEHPYF (281 aa)). ATP is bound by residues 10–18 (IGEGTYGVV) and Lys-32. Phosphothreonine is present on Thr-14. Tyr-15 is modified (phosphotyrosine). Asp-125 functions as the Proton acceptor in the catalytic mechanism. Thr-158 carries the phosphothreonine modification.

Belongs to the protein kinase superfamily. CMGC Ser/Thr protein kinase family. CDC2/CDKX subfamily. May form a complex composed of at least the catalytic subunit CRK2 and a cyclin. It depends on Mg(2+) as a cofactor.

The protein resides in the cytoplasm. It catalyses the reaction L-seryl-[protein] + ATP = O-phospho-L-seryl-[protein] + ADP + H(+). The catalysed reaction is L-threonyl-[protein] + ATP = O-phospho-L-threonyl-[protein] + ADP + H(+). It carries out the reaction [DNA-directed RNA polymerase] + ATP = phospho-[DNA-directed RNA polymerase] + ADP + H(+). Phosphorylation at Thr-14 or Tyr-15 inactivates the enzyme, while phosphorylation at Thr-158 activates it. Functionally, serine/threonine-protein kinase. Involved in the control of the cell cycle. Required for entry into S-phase and mitosis. Probable component of the kinase complex that phosphorylates the repetitive C-terminus of RNA polymerase II. The sequence is that of Cyclin-dependent kinase 2 homolog from Plasmodium chabaudi chabaudi.